A 756-amino-acid polypeptide reads, in one-letter code: Glutathione biosynthesis bifunctional protein GshAB (756 aa).

Residues 1–338 (MNYRELMQKK…TGDIFNEQVA (338 aa)) are glutamate--cysteine ligase. The ATP-grasp domain maps to 493-751 (KKILSAAGFH…LTMDVLKLLY (259 aa)). 520–578 (LRYANKAFVVKPKSTNYGLGITIFKEGASLEDFTEALRIAFKEDTAVLIEEFLPGTEYR) serves as a coordination point for ATP. Aspartate 700, glutamate 721, and asparagine 723 together coordinate Mg(2+). The Mn(2+) site is built by aspartate 700, glutamate 721, and asparagine 723.

In the N-terminal section; belongs to the glutamate--cysteine ligase type 1 family. Type 2 subfamily. Monomer. Mg(2+) is required as a cofactor. Requires Mn(2+) as cofactor.

It carries out the reaction L-cysteine + L-glutamate + ATP = gamma-L-glutamyl-L-cysteine + ADP + phosphate + H(+). It catalyses the reaction gamma-L-glutamyl-L-cysteine + glycine + ATP = glutathione + ADP + phosphate + H(+). Its pathway is sulfur metabolism; glutathione biosynthesis; glutathione from L-cysteine and L-glutamate: step 1/2. It participates in sulfur metabolism; glutathione biosynthesis; glutathione from L-cysteine and L-glutamate: step 2/2. Functionally, synthesizes glutathione from L-glutamate and L-cysteine via gamma-L-glutamyl-L-cysteine. The polypeptide is Glutathione biosynthesis bifunctional protein GshAB (Enterococcus faecalis (strain ATCC 700802 / V583)).